The primary structure comprises 229 residues: Small ribosomal subunit protein uS3 (229 aa).

The region spanning 39-107 (IRKFLKKELY…EVFINIKEEK (69 aa)) is the KH type-2 domain.

It belongs to the universal ribosomal protein uS3 family. In terms of assembly, part of the 30S ribosomal subunit. Forms a tight complex with proteins S10 and S14.

Its function is as follows. Binds the lower part of the 30S subunit head. Binds mRNA in the 70S ribosome, positioning it for translation. This is Small ribosomal subunit protein uS3 from Nitratiruptor sp. (strain SB155-2).